The chain runs to 115 residues: Large ribosomal subunit protein bL31B (115 aa).

The protein belongs to the bacterial ribosomal protein bL31 family. Type B subfamily. Part of the 50S ribosomal subunit.

The protein is Large ribosomal subunit protein bL31B of Polynucleobacter necessarius subsp. necessarius (strain STIR1).